The following is a 117-amino-acid chain: Large ribosomal subunit protein bL19 (117 aa).

It belongs to the bacterial ribosomal protein bL19 family.

In terms of biological role, this protein is located at the 30S-50S ribosomal subunit interface and may play a role in the structure and function of the aminoacyl-tRNA binding site. In Colwellia psychrerythraea (strain 34H / ATCC BAA-681) (Vibrio psychroerythus), this protein is Large ribosomal subunit protein bL19.